The sequence spans 260 residues: Mitochondrial import inner membrane translocase subunit Tim29 (260 aa).

The N-terminal 31 residues, 1-31 (MAAAALRRFWSRRRAEAGDAVVAKPGVWARL), are a transit peptide targeting the mitochondrion. The Mitochondrial matrix portion of the chain corresponds to 32-59 (GSWARALLRDYAEACRDASAEARARPGR). The chain crosses the membrane as a helical span at residues 60-77 (AAVYVGLLGGAAACFTLA). At 78–260 (PSEGAFEEAL…HSLVQAEAPR (183 aa)) the chain is on the mitochondrial intermembrane side.

In terms of assembly, component of the TIM22 complex, which core is composed of TIMM22, associated with TIMM10 (TIMM10A and/or TIMM10B), TIMM9, AGK and TIMM29. Interacts with TIMM10B; the interaction is direct. Interacts with TOMM40; linking the TIM22 complex to the TOM complex. Interacts with TIMM22 (when oxidized); the interaction is direct.

Its subcellular location is the mitochondrion inner membrane. In terms of biological role, component of the TIM22 complex, a complex that mediates the import and insertion of multi-pass transmembrane proteins into the mitochondrial inner membrane. The TIM22 complex forms a twin-pore translocase that uses the membrane potential as the external driving force. Required for the stability of the TIM22 complex and functions in the assembly of the TIMM22 protein into the TIM22 complex. May facilitate cooperation between TIM22 and TOM complexes by interacting with TOMM40. This chain is Mitochondrial import inner membrane translocase subunit Tim29, found in Homo sapiens (Human).